A 1880-amino-acid chain; its full sequence is Nonribosomal peptide synthetase otaB (1880 aa).

The segment at 205–594 (AQAVERGNSI…SVSFVGRRQA (390 aa)) is adenylation 1. The Carrier domain occupies 728 to 804 (LPLSPLERQI…ELGAHLEQEA (77 aa)). The residue at position 765 (serine 765) is an O-(pantetheine 4'-phosphoryl)serine. Residues 840–1250 (EDVYPCTALQ…LLSPQDQQQL (411 aa)) are condensation. The segment at 1269-1665 (QRQCLAHPQK…GRKDRQVKLR (397 aa)) is adenylation 2.

Belongs to the NRP synthetase family.

It carries out the reaction 7-carboxymellein + L-phenylalanine + ATP = ochratoxin B + ADP + phosphate + H(+). Its pathway is mycotoxin biosynthesis. Its function is as follows. Nonribosomal peptide synthetase; part of the gene cluster that mediates the biosynthesis of ochratoxin A (OTA), a mycotoxin composed of a chlorinated type I polyketide dihydroisocoumarin moiety linked to L-phenylalanine, and demonstrated to have nephrotoxic, immunotoxic, genotoxic, neurotoxic, and teratogenic properties. OtaB is responsible for the linking of phenylalanine to the dihydroisocoumarin ring. The pathway begins with the highly reducing polyketide synthase otaA that catalyzes the formation of the isocoumarin group during the initial stages of biosynthesis, starting from one acetate and 4 malonate units, to originate the characteristic pentaketide skeleton 7-methylmellein (7-MM) of the OTA molecule. The newly identified cyclase otaY might be involved in the polyketide cyclization reaction during the initial steps of the OTA biosynthesis. 7-MM is then oxidized into 7-carboxymellein (also called ochratoxin beta) by the cytochrome P450 monooxygenase otaC. The NRPS encoded by the otaB gene is involved in the linking of phenylalanine to the dihydroisocoumarin ring. The reaction catalyzed by NRPS results in the production of ochratoxin B (OTB), which is the non-chlorinated analog of OTA and which subsequently serves as the substrate of the halogenase otaD for chlorination activity to form the final molecular structure of OTA, containing a chlorine atom in the C-5 position of the molecule. The protein is Nonribosomal peptide synthetase otaB of Aspergillus niger (strain ATCC MYA-4892 / CBS 513.88 / FGSC A1513).